Here is a 152-residue protein sequence, read N- to C-terminus: Mediator of RNA polymerase II transcription subunit 9 (152 aa).

Positions 98–150 (IKRCKALLQENEEVRNLLANSIEEWENIIADKEQQLRVKAKVLRDLDARIEKI) form a coiled coil.

This sequence belongs to the Mediator complex subunit 9 family. In terms of assembly, component of the Mediator complex.

It localises to the nucleus. Component of the Mediator complex, a coactivator involved in the regulated transcription of nearly all RNA polymerase II-dependent genes. Mediator functions as a bridge to convey information from gene-specific regulatory proteins to the basal RNA polymerase II transcription machinery. Mediator is recruited to promoters by direct interactions with regulatory proteins and serves as a scaffold for the assembly of a functional preinitiation complex with RNA polymerase II and the general transcription factors. This chain is Mediator of RNA polymerase II transcription subunit 9 (CSE2), found in Candida glabrata (strain ATCC 2001 / BCRC 20586 / JCM 3761 / NBRC 0622 / NRRL Y-65 / CBS 138) (Yeast).